Consider the following 398-residue polypeptide: Small ribosomal subunit protein mS29 (398 aa).

The transit peptide at 1–21 (MMLKGITRLISRIHKLDPGRF) directs the protein to the mitochondrion. The segment at 39-67 (QVPVESPRAISRTNENDPAKHGDQHEGQH) is disordered. Residues 52-66 (NENDPAKHGDQHEGQ) show a composition bias toward basic and acidic residues. Residues methionine 100 and 128 to 135 (GEKGTGKT) contribute to the GTP site. 2 positions are modified to N6-acetyllysine: lysine 175 and lysine 207.

This sequence belongs to the mitochondrion-specific ribosomal protein mS29 family. As to quaternary structure, component of the mitochondrial small ribosomal subunit (mt-SSU). Mature mammalian 55S mitochondrial ribosomes consist of a small (28S) and a large (39S) subunit. The 28S small subunit contains a 12S ribosomal RNA (12S mt-rRNA) and 30 different proteins. The 39S large subunit contains a 16S rRNA (16S mt-rRNA), a copy of mitochondrial valine transfer RNA (mt-tRNA(Val)), which plays an integral structural role, and 52 different proteins. Interacts with DELE1. Interacts with NOA1. In terms of tissue distribution, ubiquitous.

It localises to the mitochondrion. The catalysed reaction is GTP + H2O = GDP + phosphate + H(+). As a component of the mitochondrial small ribosomal subunit, it plays a role in the translation of mitochondrial mRNAs. Involved in mediating interferon-gamma-induced cell death. Displays GTPase activity in vitro. The polypeptide is Small ribosomal subunit protein mS29 (Homo sapiens (Human)).